We begin with the raw amino-acid sequence, 314 residues long: Beta-lactamase (314 aa).

Residues 1–39 (MHPSTSRPSRRTLLTATAGAALAAATLVPGTAHASSGGR) constitute a signal peptide (tat-type signal). Residues 31-50 (TAHASSGGRGHGSGSVSDAE) form a disordered region. The active-site Acyl-ester intermediate is the Ser89. 259–261 (KTG) lines the substrate pocket.

Belongs to the class-A beta-lactamase family. In terms of processing, predicted to be exported by the Tat system. The position of the signal peptide cleavage has been experimentally proven.

It carries out the reaction a beta-lactam + H2O = a substituted beta-amino acid. This Streptomyces albus G protein is Beta-lactamase.